The chain runs to 296 residues: Glycine--tRNA ligase alpha subunit (296 aa).

This sequence belongs to the class-II aminoacyl-tRNA synthetase family. Tetramer of two alpha and two beta subunits.

The protein resides in the cytoplasm. It carries out the reaction tRNA(Gly) + glycine + ATP = glycyl-tRNA(Gly) + AMP + diphosphate. The sequence is that of Glycine--tRNA ligase alpha subunit from Polynucleobacter necessarius subsp. necessarius (strain STIR1).